Reading from the N-terminus, the 541-residue chain is Chaperonin GroEL (541 aa).

Residues 29–32 (TLGP), 86–90 (DGTTT), Gly-413, 476–478 (NAA), and Asp-492 contribute to the ATP site.

Belongs to the chaperonin (HSP60) family. As to quaternary structure, forms a cylinder of 14 subunits composed of two heptameric rings stacked back-to-back. Interacts with the co-chaperonin GroES.

The protein resides in the cytoplasm. The catalysed reaction is ATP + H2O + a folded polypeptide = ADP + phosphate + an unfolded polypeptide.. In terms of biological role, together with its co-chaperonin GroES, plays an essential role in assisting protein folding. The GroEL-GroES system forms a nano-cage that allows encapsulation of the non-native substrate proteins and provides a physical environment optimized to promote and accelerate protein folding. This Streptococcus equi subsp. equi (strain 4047) protein is Chaperonin GroEL.